The following is a 166-amino-acid chain: ATP synthase subunit b (166 aa).

Residues 10–30 (LLFWMIVSFGIVFVILSKYGF) traverse the membrane as a helical segment.

This sequence belongs to the ATPase B chain family. In terms of assembly, F-type ATPases have 2 components, F(1) - the catalytic core - and F(0) - the membrane proton channel. F(1) has five subunits: alpha(3), beta(3), gamma(1), delta(1), epsilon(1). F(0) has three main subunits: a(1), b(2) and c(10-14). The alpha and beta chains form an alternating ring which encloses part of the gamma chain. F(1) is attached to F(0) by a central stalk formed by the gamma and epsilon chains, while a peripheral stalk is formed by the delta and b chains.

It localises to the cell inner membrane. F(1)F(0) ATP synthase produces ATP from ADP in the presence of a proton or sodium gradient. F-type ATPases consist of two structural domains, F(1) containing the extramembraneous catalytic core and F(0) containing the membrane proton channel, linked together by a central stalk and a peripheral stalk. During catalysis, ATP synthesis in the catalytic domain of F(1) is coupled via a rotary mechanism of the central stalk subunits to proton translocation. Functionally, component of the F(0) channel, it forms part of the peripheral stalk, linking F(1) to F(0). This Parabacteroides distasonis (strain ATCC 8503 / DSM 20701 / CIP 104284 / JCM 5825 / NCTC 11152) protein is ATP synthase subunit b.